The following is a 227-amino-acid chain: ATP-dependent Clp protease proteolytic subunit (227 aa).

The active-site Nucleophile is S123. H148 is a catalytic residue.

This sequence belongs to the peptidase S14 family. As to quaternary structure, fourteen ClpP subunits assemble into 2 heptameric rings which stack back to back to give a disk-like structure with a central cavity, resembling the structure of eukaryotic proteasomes.

It is found in the cytoplasm. It carries out the reaction Hydrolysis of proteins to small peptides in the presence of ATP and magnesium. alpha-casein is the usual test substrate. In the absence of ATP, only oligopeptides shorter than five residues are hydrolyzed (such as succinyl-Leu-Tyr-|-NHMec, and Leu-Tyr-Leu-|-Tyr-Trp, in which cleavage of the -Tyr-|-Leu- and -Tyr-|-Trp bonds also occurs).. Its function is as follows. Cleaves peptides in various proteins in a process that requires ATP hydrolysis. Has a chymotrypsin-like activity. Plays a major role in the degradation of misfolded proteins. The polypeptide is ATP-dependent Clp protease proteolytic subunit (Chlorobium phaeobacteroides (strain DSM 266 / SMG 266 / 2430)).